Reading from the N-terminus, the 532-residue chain is E3 ubiquitin-protein ligase rnf8-B (532 aa).

An FHA domain is found at 30 to 84 (VTMGRGLGVTYQLKPTLCPLMISRTHCLFKQNARDEWTVTDNKSLNGVWRNKERL). Residues 127 to 209 (SLIRPLPGKT…VETDTVSPTQ (83 aa)) are disordered. Positions 169–178 (VSRDGEDSAK) are enriched in basic and acidic residues. The RING-type zinc finger occupies 377-415 (CIICSEHFIEAVTLNCAHSFCSYCIKSWRKRKEECPICR).

It belongs to the RNF8 family. As to quaternary structure, homodimer. Forms a E2-E3 ubiquitin ligase complex composed of the rnf8 homodimer and a E2 heterodimer of ube2n and ube2v2.

It is found in the nucleus. The enzyme catalyses S-ubiquitinyl-[E2 ubiquitin-conjugating enzyme]-L-cysteine + [acceptor protein]-L-lysine = [E2 ubiquitin-conjugating enzyme]-L-cysteine + N(6)-ubiquitinyl-[acceptor protein]-L-lysine.. The protein operates within protein modification; protein ubiquitination. Its function is as follows. E3 ubiquitin-protein ligase that plays a key role in DNA damage signaling via 2 distinct roles: by mediating the 'Lys-63'-linked ubiquitination of histones H2A and H2AX and promoting the recruitment of DNA repair proteins at double-strand breaks (DSBs) sites, and by catalyzing 'Lys-48'-linked ubiquitination to remove target proteins from DNA damage sites. Following DNA DSBs, it is recruited to the sites of damage by ATM-phosphorylated mdc1 and catalyzes the 'Lys-63'-linked ubiquitination of histones H2A and H2AX, thereby promoting the formation of tp53bp1 and brca1 ionizing radiation-induced foci (IRIF). H2A ubiquitination also mediates the ATM-dependent transcriptional silencing at regions flanking DSBs in cis, a mechanism to avoid collision between transcription and repair intermediates. Also catalyzes the formation of 'Lys-48'-linked polyubiquitin chains, leading to degradation of substrate proteins. In addition to its function in damage signaling, also plays a role in higher-order chromatin structure by mediating extensive chromatin decondensation. The protein is E3 ubiquitin-protein ligase rnf8-B of Xenopus laevis (African clawed frog).